The primary structure comprises 117 residues: Hainantoxin-XV.2 (117 aa).

The signal sequence occupies residues 1–20; that stretch reads MKLCAVIIASLLVCAAVASS. Residues 18-55 form a disordered region; that stretch reads ASSSDNQKEFAQEKEMTREETQSLGEHEKDDEVTGSEE. Positions 21–56 are excised as a propeptide; sequence SDNQKEFAQEKEMTREETQSLGEHEKDDEVTGSEER. Basic and acidic residues predominate over residues 23-55; sequence NQKEFAQEKEMTREETQSLGEHEKDDEVTGSEE. Cystine bridges form between Cys-58-Cys-72, Cys-65-Cys-78, Cys-69-Cys-115, and Cys-71-Cys-91.

Belongs to the neurotoxin 03 (Tx2) family. 02 subfamily. HNTX-XV sub-subfamily. As to expression, expressed by the venom gland.

Its subcellular location is the secreted. Its function is as follows. Putative ion channel inhibitor. This Cyriopagopus hainanus (Chinese bird spider) protein is Hainantoxin-XV.2.